The following is a 400-amino-acid chain: WW domain-containing transcription regulator protein 1 (400 aa).

Lys-46 is covalently cross-linked (Glycyl lysine isopeptide (Lys-Gly) (interchain with G-Cter in ubiquitin)). The segment at 52–117 (FFKEPDSGSH…QQHAHLRQQS (66 aa)) is disordered. Residues 61 to 70 (HSRQSSTDSS) show a composition bias toward polar residues. Residue Ser-62 is modified to Phosphoserine. Residue Ser-89 is modified to Phosphoserine; by LATS2. At Ser-105 the chain carries Phosphoserine. The WW domain occupies 124 to 157 (LPLPPGWEMTFTATGQRYFLNHIEKITTWQDPRK). Positions 222-400 (PNALTTQQQQ…NKSEPFLTWL (179 aa)) are required for interaction with PALS1. A coiled-coil region spans residues 225–259 (LTTQQQQQQKLRLQRIQMERERIRMRQEELMRQEA). At Ser-295 the chain carries Phosphoserine. Position 311 is a phosphoserine; by LATS2 (Ser-311). A PDZ-binding motif is present at residues 394-400 (EPFLTWL).

Binds to SLC9A3R2 via the PDZ motif at the plasma membrane. Binds to YWHAZ in vivo and in vitro through the phosphoserine-binding motif RSHSSP. Interacts (via coiled-coil domain) with SMAD2 (via MH1 domain), SMAD3 and SMAD4. Interacts with MED15. Interacts with PAX8 and NKX2-1. Interacts with TEAD1, TEAD2, TEAD3 and TEAD4. Interacts (via WW domain) with PALS1. Interacts with LATS1. Interacts with YAP1 (when phosphorylated at 'Ser-127'). Interacts (via WW domain) with PRRG4 (via cytoplasmic domain). Interacts (via WW domain) with AMOTL2 (via PPXY motif); the interaction promotes WWTR1/TAZ localization to the cytoplasm and tight junctions, thereby inhibiting its transcriptional coactivator properties. Interacts (via WW domain) with AMOT isoform 1; the interaction facilitates translocation of WWTR1/TAZ to the cytoplasm. In terms of processing, phosphorylated by LATS2 and STK3/MST2. Phosphorylation by LATS2 results in creation of 14-3-3 binding sites, retention in the cytoplasm, and functional inactivation. Phosphorylation results in the inhibition of transcriptional coactivation through YWHAZ-mediated nuclear export. Phosphorylated in the nucleus by PRP4K; phosphorylation leads to nuclear exclusion. Post-translationally, ubiquitinated at Lys-46; leading to proteasomal degradation. Deubiquitinated and stabilized by UCHL1 at Lys-46; leading to inhibition of osteoclastogenesis. As to expression, highly expressed in kidney, heart, placenta and lung. Expressed in the thyroid tissue.

The protein resides in the nucleus. The protein localises to the cytoplasm. It localises to the cell membrane. Its subcellular location is the cell junction. It is found in the tight junction. Functionally, transcriptional coactivator which acts as a downstream regulatory target in the Hippo signaling pathway that plays a pivotal role in organ size control and tumor suppression by restricting proliferation and promoting apoptosis. The core of this pathway is composed of a kinase cascade wherein STK3/MST2 and STK4/MST1, in complex with its regulatory protein SAV1, phosphorylates and activates LATS1/2 in complex with its regulatory protein MOB1, which in turn phosphorylates and inactivates YAP1 oncoprotein and WWTR1/TAZ. WWTR1 enhances PAX8 and NKX2-1/TTF1-dependent gene activation. In conjunction with YAP1, involved in the regulation of TGFB1-dependent SMAD2 and SMAD3 nuclear accumulation. Plays a key role in coupling SMADs to the transcriptional machinery such as the mediator complex. Regulates embryonic stem-cell self-renewal, promotes cell proliferation and epithelial-mesenchymal transition. The chain is WW domain-containing transcription regulator protein 1 from Homo sapiens (Human).